The sequence spans 954 residues: Kinesin-like protein KIN-7A (954 aa).

A disordered region spans residues 1–29 (MGVSRPPSTPASKIERTPMSTPTPGGSTR). Low complexity predominate over residues 17–28 (TPMSTPTPGGST). Residues 34–354 (KIFVTVRVRP…LFFATCAKEV (321 aa)) form the Kinesin motor domain. ATP is bound at residue 119-126 (GQTSSGKT). Coiled coils occupy residues 363–436 (VVSD…GDNQ) and 480–588 (LKHE…LVMS). Disordered stretches follow at residues 624-689 (PNLI…SSVN) and 741-762 (GKTN…DGPD). The span at 630 to 639 (PCSPLSSSRP) shows a compositional bias: low complexity. Composition is skewed to basic and acidic residues over residues 640–660 (LEPE…EGSE) and 666–681 (KSED…ETPR).

This sequence belongs to the TRAFAC class myosin-kinesin ATPase superfamily. Kinesin family. KIN-7 subfamily. Ubiquitous with a preferential expression in the shoot apical meristem (SAM).

Its function is as follows. May be essential to promote the progression of cytokinesis during node-internode differentiation. The protein is Kinesin-like protein KIN-7A of Oryza sativa subsp. japonica (Rice).